Consider the following 180-residue polypeptide: NADH-quinone oxidoreductase subunit I (180 aa).

4Fe-4S ferredoxin-type domains follow at residues 48 to 80 (IVLT…LQKA) and 90 to 119 (EFFR…LTPD). Cysteine 60, cysteine 63, cysteine 66, cysteine 70, cysteine 99, cysteine 102, cysteine 105, and cysteine 109 together coordinate [4Fe-4S] cluster. Residues 160–180 (GKPKGSAQKEAAPIDVKSILP) form a disordered region.

It belongs to the complex I 23 kDa subunit family. NDH-1 is composed of 14 different subunits. Subunits NuoA, H, J, K, L, M, N constitute the membrane sector of the complex. [4Fe-4S] cluster serves as cofactor.

It localises to the cell inner membrane. It carries out the reaction a quinone + NADH + 5 H(+)(in) = a quinol + NAD(+) + 4 H(+)(out). NDH-1 shuttles electrons from NADH, via FMN and iron-sulfur (Fe-S) centers, to quinones in the respiratory chain. The immediate electron acceptor for the enzyme in this species is believed to be ubiquinone. Couples the redox reaction to proton translocation (for every two electrons transferred, four hydrogen ions are translocated across the cytoplasmic membrane), and thus conserves the redox energy in a proton gradient. The polypeptide is NADH-quinone oxidoreductase subunit I (Tolumonas auensis (strain DSM 9187 / NBRC 110442 / TA 4)).